Reading from the N-terminus, the 1217-residue chain is Splicing factor 3B subunit 3 (1217 aa).

2 interaction with PHF5A, SF3B1 and SF3B5 regions span residues 105-119 (ETFGKSGCRRIVPGQ) and 145-168 (NRDAAARLTISSPLEAHKANTLVY). Ser-156 carries the post-translational modification Phosphoserine. Interaction with SF3B1 and SF3B5 stretches follow at residues 193-231 (DNDPTGEAAANTQQTLTFYELDLGLNHVVRKYSEPLEEH) and 786-804 (RKFVIHPESNNLIIIETDH). The tract at residues 1028–1049 (TYPRWVTTASLLDYDTVAGADK) is interaction with SF3B1. An interaction with SF3B5 region spans residues 1100-1123 (TVLSLQKTTLIPGGSESLVYTTLS). Phosphothreonine is present on Thr-1200.

It belongs to the RSE1 family. Component of the 17S U2 SnRNP complex, a ribonucleoprotein complex that contains small nuclear RNA (snRNA) U2 and a number of specific proteins. Part of the SF3B subcomplex of the 17S U2 SnRNP complex. SF3B associates with the splicing subcomplex SF3A and a 12S RNA unit to form the U2 small nuclear ribonucleoproteins complex (U2 snRNP). Within the SF3B subcomplex, interacts directly with SF3B1 (via HEAT domain), SF3B5 and PHF5A. Identified in the spliceosome A complex; remains associated with the spliceosome throughout the splicing process. Component of the spliceosome B complex. Identified in the spliceosome C complex. Identified in the spliceosome E complex. Component of the minor (U12-type spliceosome) spliceosome. Within this complex, interacts with SCNM1. Associates with the STAGA transcription coactivator-HAT complex. Interacts with SUPT3H. Interacts with TAF3.

It is found in the nucleus. Its function is as follows. Component of the 17S U2 SnRNP complex of the spliceosome, a large ribonucleoprotein complex that removes introns from transcribed pre-mRNAs. The 17S U2 SnRNP complex (1) directly participates in early spliceosome assembly and (2) mediates recognition of the intron branch site during pre-mRNA splicing by promoting the selection of the pre-mRNA branch-site adenosine, the nucleophile for the first step of splicing. Within the 17S U2 SnRNP complex, SF3B3 is part of the SF3B subcomplex, which is required for 'A' complex assembly formed by the stable binding of U2 snRNP to the branchpoint sequence in pre-mRNA. Sequence independent binding of SF3A and SF3B subcomplexes upstream of the branch site is essential, it may anchor U2 snRNP to the pre-mRNA. May also be involved in the assembly of the 'E' complex. Also acts as a component of the minor spliceosome, which is involved in the splicing of U12-type introns in pre-mRNAs. This is Splicing factor 3B subunit 3 (Sf3b3) from Mus musculus (Mouse).